The following is a 397-amino-acid chain: ATP phosphoribosyltransferase regulatory subunit (397 aa).

Belongs to the class-II aminoacyl-tRNA synthetase family. HisZ subfamily. Heteromultimer composed of HisG and HisZ subunits.

It is found in the cytoplasm. The protein operates within amino-acid biosynthesis; L-histidine biosynthesis; L-histidine from 5-phospho-alpha-D-ribose 1-diphosphate: step 1/9. Functionally, required for the first step of histidine biosynthesis. May allow the feedback regulation of ATP phosphoribosyltransferase activity by histidine. This Halalkalibacterium halodurans (strain ATCC BAA-125 / DSM 18197 / FERM 7344 / JCM 9153 / C-125) (Bacillus halodurans) protein is ATP phosphoribosyltransferase regulatory subunit.